Consider the following 414-residue polypeptide: ORC1-type DNA replication protein 1 (414 aa).

Residues 70–74 (TGKTA), Y213, and R225 contribute to the ATP site.

It belongs to the CDC6/cdc18 family.

Involved in regulation of DNA replication. The chain is ORC1-type DNA replication protein 1 (cdc6-1) from Methanosarcina mazei (strain ATCC BAA-159 / DSM 3647 / Goe1 / Go1 / JCM 11833 / OCM 88) (Methanosarcina frisia).